The following is a 1388-amino-acid chain: ESX-5 secretion system protein EccC5 (1388 aa).

2 helical membrane-spanning segments follow: residues 38-58 (WLIV…AMVF) and 65-85 (FGGV…MMMF). FtsK domains follow at residues 477-679 (GELL…GAAQ), 855-1049 (QPPW…EDAK), and 1158-1351 (LQPV…DPDE). ATP is bound by residues 500–507 (GTTGSGKS), 873–880 (GAGGSGKT), and 1175–1182 (GRRECGRT).

Part of the ESX-5 / type VII secretion system (T7SS), which is composed of cytosolic and membrane components. The ESX-5 membrane complex is composed of EccB5, EccC5, EccD5 and EccE5.

Its subcellular location is the cell inner membrane. Its function is as follows. Part of the ESX-5 specialized secretion system, which is responsible for the secretion of EsxN and a number of PE_PGRS and PPE proteins. This component is essential for ESX-5 complex stability and secretion. The chain is ESX-5 secretion system protein EccC5 from Mycobacterium marinum (strain ATCC BAA-535 / M).